We begin with the raw amino-acid sequence, 326 residues long: WRKY transcription factor 8 (326 aa).

The tract at residues 115 to 172 (VRVSASPSSSEADHHPGEDSGKIRKKREVRDGGEDDQRSQKVVKTKKKEEKKKEPRVS) is disordered. Basic and acidic residues-rich tracts occupy residues 125 to 153 (EADH…DQRS) and 161 to 170 (KKEEKKKEPR). Residues 177 to 242 (TEVDHLEDGY…YESQHNHPIP (66 aa)) constitute a DNA-binding region (WRKY).

The protein belongs to the WRKY group II-c family. As to quaternary structure, interacts with VQ9 (via N-terminus). As to expression, highly expressed in roots and at lower levels in rosette leaves, cauline leaves, stems, flowers and siliques.

The protein resides in the nucleus. Its function is as follows. Transcription factor. Interacts specifically with the W box (5'-TTGAC[CT]-3'), a frequently occurring stress-responsive cis-acting element. Functions as a positive regulator of salt stress response. Binds the W box of LTI78/RD29A stress-response gene and directly regulates its transcription under salt stress. Functions antagonistically with VQ9 to regulate sodium and potassium homeostasis under salt stress by regulating the expression of downstream SOS (SALT OVERLY SENSITIVE) stress-responsive genes. The DNA-binding activity of WRKY8 is decreased by VQ9. Functions as a negative regulator of basal resistance to the bacterial pathogen P.syringae and as positive regulator of resistance to the fungal pathogen to B.cinerea. Functions as a positive regulator of defense response againt tobamovirus (TMV) by regulating both the abscisic acid and ethylene signaling pathways. Positively regulates ABI4 expression and negatively modulates ACS6 and ERF104 expression by directly binding to the W box consensus motifs within their promoters. This Arabidopsis thaliana (Mouse-ear cress) protein is WRKY transcription factor 8 (WRKY8).